The chain runs to 71 residues: MKTQFIVLIVAIVFLQLLSQSEAIFSAIAGLLSNLLGKRDLRHLDLDQFDDMFDQPEISAADMKFLQDLLR.

The first 23 residues, 1 to 23 (MKTQFIVLIVAIVFLQLLSQSEA), serve as a signal peptide directing secretion. Position 36 is a leucine amide (leucine 36). Residues 40–71 (DLRHLDLDQFDDMFDQPEISAADMKFLQDLLR) constitute a propeptide that is removed on maturation.

This sequence belongs to the non-disulfide-bridged peptide (NDBP) superfamily. Short antimicrobial peptide (group 4) family. In terms of tissue distribution, expressed by the venom gland.

The protein localises to the secreted. It is found in the target cell membrane. Its function is as follows. Antimicrobial peptide. Is active on Mycobacterium abscessus subsp. massiliense (MBC=200 uM), a rapidly growing and emerging pathogen associated with healthcare infections. Also shows antifungal activities. Has a weak hemolytic activity on human erythrocytes (10% at 610 uM), indicating a low toxicity (therapeutic index (TI)=3.05). In addition, treatment of infected macrophages reduces the bacterial load. In vivo, treatment of M.abscessus-infected mice causes a decrease in the bacterial load in the lungs and liver. The protein is Non-disulfide-bridged peptide 5.5 of Hoffmannihadrurus gertschi (Scorpion).